The sequence spans 338 residues: Anthranilate phosphoribosyltransferase (338 aa).

5-phospho-alpha-D-ribose 1-diphosphate is bound by residues Gly78, 81-82 (GD), Ser86, 88-91 (NIST), 106-114 (KHGNKSVTS), and Ser118. Anthranilate is bound at residue Gly78. Residue Ser90 participates in Mg(2+) binding. An anthranilate-binding site is contributed by Asn109. Arg163 contributes to the anthranilate binding site. Asp222 and Glu223 together coordinate Mg(2+).

This sequence belongs to the anthranilate phosphoribosyltransferase family. As to quaternary structure, homodimer. It depends on Mg(2+) as a cofactor.

The enzyme catalyses N-(5-phospho-beta-D-ribosyl)anthranilate + diphosphate = 5-phospho-alpha-D-ribose 1-diphosphate + anthranilate. It functions in the pathway amino-acid biosynthesis; L-tryptophan biosynthesis; L-tryptophan from chorismate: step 2/5. In terms of biological role, catalyzes the transfer of the phosphoribosyl group of 5-phosphorylribose-1-pyrophosphate (PRPP) to anthranilate to yield N-(5'-phosphoribosyl)-anthranilate (PRA). The chain is Anthranilate phosphoribosyltransferase from Staphylococcus saprophyticus subsp. saprophyticus (strain ATCC 15305 / DSM 20229 / NCIMB 8711 / NCTC 7292 / S-41).